The chain runs to 102 residues: Large ribosomal subunit protein uL24 (102 aa).

It belongs to the universal ribosomal protein uL24 family. In terms of assembly, part of the 50S ribosomal subunit.

Its function is as follows. One of two assembly initiator proteins, it binds directly to the 5'-end of the 23S rRNA, where it nucleates assembly of the 50S subunit. One of the proteins that surrounds the polypeptide exit tunnel on the outside of the subunit. The protein is Large ribosomal subunit protein uL24 of Herpetosiphon aurantiacus (strain ATCC 23779 / DSM 785 / 114-95).